Reading from the N-terminus, the 384-residue chain is Sphingosine kinase 1 (384 aa).

One can recognise a DAGKc domain in the interval 12-159 (PRPCRVLVLL…MNLLSLHTAS (148 aa)). ATP-binding positions include 22–24 (NPR) and 54–58 (TERRN). 79–82 (SGDG) is a substrate binding site. The Proton donor/acceptor role is filled by Asp-81. ATP is bound by residues Glu-86 and 111–113 (GSG). Short sequence motifs (nuclear export signal) lie at residues 147-155 (LSPMNLLSL) and 161-169 (LRLFSVLSL). Residue Asp-178 coordinates substrate. ATP-binding residues include Arg-185 and Arg-191. Phosphothreonine is present on Thr-193. At Ser-225 the chain carries Phosphoserine. 341–343 (DGE) is a binding site for ATP.

Interacts with ACY1. Binds to calmodulin. Interacts with SPHKAP. Interacts with CIB1, the interaction occurs in a calcium-dependent manner. Interacts with TRAF2. Interacts with EEF1A1; the interaction enhances SPHK1 kinase activity. Requires Mg(2+) as cofactor. As to expression, widely expressed with highest levels in adult liver, kidney, heart and skeletal muscle. Expressed in brain cortex (at protein level).

Its subcellular location is the cytoplasm. It is found in the nucleus. The protein localises to the cell membrane. The protein resides in the endosome membrane. It localises to the membrane. Its subcellular location is the clathrin-coated pit. It is found in the synapse. It catalyses the reaction a sphingoid base + ATP = a sphingoid 1-phosphate + ADP + H(+). The enzyme catalyses L-seryl-[protein] + acetyl-CoA = O-acetyl-L-seryl-[protein] + CoA. It carries out the reaction sphinganine + ATP = sphinganine 1-phosphate + ADP + H(+). The catalysed reaction is sphing-4-enine + ATP = sphing-4-enine 1-phosphate + ADP + H(+). It catalyses the reaction 1-O-hexadecyl-2-amino-sn-glycerol + ATP = 1-O-hexadecyl-2-desoxy-2-amino-sn-glycero-3-phosphate + ADP + H(+). With respect to regulation, acetyltransferase activity increases in presence of the kinase substrate, sphingosine. In Purkinje cells, kinase activity on sphingosine increases in presence of VEGFA. In neurons, kinase activity increases during the first 24h in presence of Amyloid-beta protein 42 to decrease after 96h. Catalyzes the phosphorylation of sphingosine to form sphingosine 1-phosphate (SPP), a lipid mediator with both intra- and extracellular functions. Also acts on D-erythro-sphingosine and to a lesser extent sphinganine, but not other lipids, such as D,L-threo-dihydrosphingosine, N,N-dimethylsphingosine, diacylglycerol, ceramide, or phosphatidylinositol. In contrast to proapoptotic SPHK2, has a negative effect on intracellular ceramide levels, enhances cell growth and inhibits apoptosis. Involved in the regulation of inflammatory response and neuroinflammation. Via the product sphingosine 1-phosphate, stimulates TRAF2 E3 ubiquitin ligase activity, and promotes activation of NF-kappa-B in response to TNF signaling leading to IL17 secretion. In response to TNF and in parallel to NF-kappa-B activation, negatively regulates RANTES induction through p38 MAPK signaling pathway. Involved in endocytic membrane trafficking induced by sphingosine, recruited to dilate endosomes, also plays a role on later stages of endosomal maturation and membrane fusion independently of its kinase activity. In Purkinje cells, seems to be also involved in the regulation of autophagosome-lysosome fusion upon VEGFA. Its function is as follows. Has serine acetyltransferase activity on PTGS2/COX2 in an acetyl-CoA dependent manner. The acetyltransferase activity increases in presence of the kinase substrate, sphingosine. During neuroinflammation, through PTGS2 acetylation, promotes neuronal secretion of specialized preresolving mediators (SPMs), especially 15-R-lipoxin A4, which results in an increase of phagocytic microglia. The sequence is that of Sphingosine kinase 1 from Homo sapiens (Human).